The chain runs to 204 residues: Thymidylate kinase (204 aa).

13–20 (GIDGSGKS) is a binding site for ATP.

The protein belongs to the thymidylate kinase family.

It catalyses the reaction dTMP + ATP = dTDP + ADP. Its function is as follows. Phosphorylation of dTMP to form dTDP in both de novo and salvage pathways of dTTP synthesis. The polypeptide is Thymidylate kinase (Leptospira interrogans serogroup Icterohaemorrhagiae serovar copenhageni (strain Fiocruz L1-130)).